A 239-amino-acid polypeptide reads, in one-letter code: Uridylate kinase (239 aa).

10–13 is an ATP binding site; it reads KLSG. Residue glycine 52 participates in UMP binding. Glycine 53 and arginine 57 together coordinate ATP. UMP-binding positions include aspartate 72 and 133–140; that span reads TGNPFFTT. Threonine 160, tyrosine 166, and aspartate 169 together coordinate ATP.

It belongs to the UMP kinase family. In terms of assembly, homohexamer.

It localises to the cytoplasm. The catalysed reaction is UMP + ATP = UDP + ADP. The protein operates within pyrimidine metabolism; CTP biosynthesis via de novo pathway; UDP from UMP (UMPK route): step 1/1. With respect to regulation, inhibited by UTP. Catalyzes the reversible phosphorylation of UMP to UDP. In Porphyromonas gingivalis (strain ATCC BAA-308 / W83), this protein is Uridylate kinase.